The following is a 295-amino-acid chain: Ribosomal protein L11 methyltransferase (295 aa).

T146, G167, D189, and N231 together coordinate S-adenosyl-L-methionine.

The protein belongs to the methyltransferase superfamily. PrmA family.

It localises to the cytoplasm. The enzyme catalyses L-lysyl-[protein] + 3 S-adenosyl-L-methionine = N(6),N(6),N(6)-trimethyl-L-lysyl-[protein] + 3 S-adenosyl-L-homocysteine + 3 H(+). Methylates ribosomal protein L11. The sequence is that of Ribosomal protein L11 methyltransferase from Vibrio vulnificus (strain CMCP6).